The chain runs to 276 residues: Putative oxidoreductase SadH (276 aa).

Ser-142 serves as a coordination point for substrate. The active-site Proton acceptor is the Tyr-155.

It belongs to the short-chain dehydrogenases/reductases (SDR) family.

Functionally, required for maintaining the appropriate mycolic acid composition and permeability of the envelope on its exposure to acidic pH. The polypeptide is Putative oxidoreductase SadH (sadH) (Mycobacterium tuberculosis (strain CDC 1551 / Oshkosh)).